Here is a 198-residue protein sequence, read N- to C-terminus: Recombination protein RecR (198 aa).

A C4-type zinc finger spans residues 57–72 (CSICGNLTESDPCAIC). In terms of domain architecture, Toprim spans 80-175 (TTILVVEESK…KVTRLARGLA (96 aa)).

Belongs to the RecR family.

May play a role in DNA repair. It seems to be involved in an RecBC-independent recombinational process of DNA repair. It may act with RecF and RecO. The sequence is that of Recombination protein RecR from Lactococcus lactis subsp. lactis (strain IL1403) (Streptococcus lactis).